The chain runs to 405 residues: Phosphopentomutase (405 aa).

The Mn(2+) site is built by aspartate 10, aspartate 303, histidine 308, aspartate 344, histidine 345, and histidine 356.

It belongs to the phosphopentomutase family. The cofactor is Mn(2+).

It is found in the cytoplasm. It catalyses the reaction 2-deoxy-alpha-D-ribose 1-phosphate = 2-deoxy-D-ribose 5-phosphate. The enzyme catalyses alpha-D-ribose 1-phosphate = D-ribose 5-phosphate. It participates in carbohydrate degradation; 2-deoxy-D-ribose 1-phosphate degradation; D-glyceraldehyde 3-phosphate and acetaldehyde from 2-deoxy-alpha-D-ribose 1-phosphate: step 1/2. In terms of biological role, isomerase that catalyzes the conversion of deoxy-ribose 1-phosphate (dRib-1-P) and ribose 1-phosphate (Rib-1-P) to deoxy-ribose 5-phosphate (dRib-5-P) and ribose 5-phosphate (Rib-5-P), respectively. This Shewanella woodyi (strain ATCC 51908 / MS32) protein is Phosphopentomutase.